The sequence spans 423 residues: MFSYSSSDWQRRFDEPEKPSRIIAHHDERGPFAKDRARVLHSAALRRLADKTQVVGPRDGDNPRTRLTHSLEVAQIARGIGTGLGLDADLCEMAGLTHDIGHPPYGHNGEKALAEIAQDCGGFEGNAQTLRILSKLEPKIVDDHDQSYGLNLTRAALDAACKYPRTKTNPDGSVNKKYGCYDEDAHILQWVRQGHEDTSACVEAQAMDFSDDIAYSVHDVEDGIVSGRVHLGVLWDFVELAELAEKGARAFGGTPEALVDAADHLRELPIISAAADFDGSLRGYVDLKAMTSQLVGRYVGAVIEASRAANPTGVFGRSTGQVVVPDQVLAEVTLLKTIAVLYVMDDPTHRQRQDRQRERIYRVYDYLVAGGRGALDPMFRLWWEQAESEAQRQRVIIDNISSMTESRLERVAKQSAELSSFMG.

The region spanning arginine 66–serine 216 is the HD domain.

It belongs to the dGTPase family. Type 2 subfamily.

This Corynebacterium diphtheriae (strain ATCC 700971 / NCTC 13129 / Biotype gravis) protein is Deoxyguanosinetriphosphate triphosphohydrolase-like protein.